We begin with the raw amino-acid sequence, 387 residues long: Na(+)/H(+)-K(+) antiporter GerN (387 aa).

A run of 11 helical transmembrane segments spans residues 29–49 (PSVL…LGWI), 54–74 (LLTQ…GLET), 87–107 (LAVA…SGLV), 114–134 (NAVF…VQTL), 149–169 (LGAA…AMSF), 175–195 (VNLT…ILIG), 219–239 (ALII…AGII), 263–283 (PIAY…NITF), 290–310 (IWFI…GCGF), 324–344 (IIGA…GTGL), and 347–367 (GLLA…TTMI).

It belongs to the monovalent cation:proton antiporter 2 (CPA2) transporter (TC 2.A.37) family.

It localises to the membrane. Functionally, na(+)/H(+) antiporter that extrudes sodium in exchange for external protons. Can also use potassium as a coupling ion, without completely replacing H(+). This Na(+)/H(+)-K(+) antiport is much more rapid than Na(+)/H(+) antiport. Can also extrude lithium. Important for the inosine-dependent germination of spores. The protein is Na(+)/H(+)-K(+) antiporter GerN (gerN) of Bacillus cereus.